The sequence spans 356 residues: Phenylalanine--tRNA ligase alpha subunit (356 aa).

Residue Glu260 participates in Mg(2+) binding.

The protein belongs to the class-II aminoacyl-tRNA synthetase family. Phe-tRNA synthetase alpha subunit type 1 subfamily. As to quaternary structure, tetramer of two alpha and two beta subunits. Mg(2+) serves as cofactor.

The protein localises to the cytoplasm. It carries out the reaction tRNA(Phe) + L-phenylalanine + ATP = L-phenylalanyl-tRNA(Phe) + AMP + diphosphate + H(+). This is Phenylalanine--tRNA ligase alpha subunit from Gluconacetobacter diazotrophicus (strain ATCC 49037 / DSM 5601 / CCUG 37298 / CIP 103539 / LMG 7603 / PAl5).